A 184-amino-acid polypeptide reads, in one-letter code: Putative YfeABCD regulator YfeE (184 aa).

The next 3 helical transmembrane spans lie at 15–35 (IAGW…IINF), 84–104 (LSAG…GLSL), and 162–182 (ILPS…GIMI).

This sequence to E.coli YniB.

Its subcellular location is the cell membrane. In terms of biological role, putative regulator of YfeABCD, an ABC transporter locus involved in inorganic iron transport. This is Putative YfeABCD regulator YfeE (yfeE) from Yersinia pestis.